The primary structure comprises 74 residues: Small ribosomal subunit protein bS18 (74 aa).

The protein belongs to the bacterial ribosomal protein bS18 family. Part of the 30S ribosomal subunit. Forms a tight heterodimer with protein bS6.

Functionally, binds as a heterodimer with protein bS6 to the central domain of the 16S rRNA, where it helps stabilize the platform of the 30S subunit. The polypeptide is Small ribosomal subunit protein bS18 (Thioalkalivibrio sulfidiphilus (strain HL-EbGR7)).